Reading from the N-terminus, the 2180-residue chain is Genome polyprotein (2180 aa).

Disordered regions lie at residues D507–P529, Q624–Q679, K703–P809, and S822–M848. Residues S573 to Q624 adopt a coiled-coil conformation. 2 stretches are compositionally biased toward polar residues: residues D631–H643 and P670–Q679. Residues K703–Q716 show a composition bias toward basic and acidic residues. Residues S759 to E771 are compositionally biased toward polar residues. Residues S784–T807 are compositionally biased toward low complexity. The span at S822 to T832 shows a compositional bias: acidic residues. Residues C1113–C1126 form a CCHC-type zinc finger. D1227 acts as the For protease activity; shared with dimeric partner in catalysis. Positions 1480, 1543, and 1544 each coordinate Mg(2+). 3 disordered regions span residues R1824–S1848, N2115–C2145, and Y2161–I2180. A compositionally biased stretch (polar residues) spans S1828–L1847. The span at S2120–C2145 shows a compositional bias: basic residues. Over residues T2163–I2180 the composition is skewed to polar residues.

Belongs to the Petuviruses genome polyprotein family.

The catalysed reaction is DNA(n) + a 2'-deoxyribonucleoside 5'-triphosphate = DNA(n+1) + diphosphate. Functionally, encodes presumably for at least four polypeptides: Movement protein (MP), capsid protein (CP), Protease (PR), and reverse transcriptase (RT). This Petunia (PVCV) protein is Genome polyprotein.